Here is a 967-residue protein sequence, read N- to C-terminus: MSHESSEKAHKAIENVEDYCQTLTRHGNEELRTNLERVITTFKSNLMHSLLDIHDLYEQTLLSERKSDAEKNMEVRRVIERLEGGPHSYNSRPAATTSTSNYNLSSTTPLISDLRDRGGFSYLNGGGLGNGLGNGLGNGLLSSPYNSSSTHYLHERQRQTSHDGTWRETTTRTVDTPSGLERRVVEHTGVIDDHGRKWELENIVLEKGHTGLGFSITGGMDQPTEDGDTSIYVTNIIEGGAALADGRMRKNDIITAVNNTNCENVKHEVAVNALKSSGNVVSLSLKRRKDEAFLPIGGNFGGSTSYLRSGVTPSVSAGNLQHAIHSPSAPIHPPPPPPVHHGSLSQLSVGQYRSTRPNTSVIDLVKGARGLGFSIAGGQGNEHVKGDTDIYVTKIIEEGAAELDGRLRVGDKILEVDHHSLINTTHENAVNVLKNTGNRVRLLIQQGTGAIFNDSASQQFMPTTPILRPSSVQDYNRSQMGSQSHLSYGGPLNTSYSSQAPIAIPLEPRPVQLVKGQNGLGFNIVGGEDNEPIYISFVLPGGVADLSGNVKTGDVLLEVNGVVLRNATHKEAAEALRNAGNPVYLTLQYRPQEYQIFESKIEKLRNDVIAQSRMGTLSRKSEYVRALFDYDPSRENSVAPHRSMGFNYGDILHIINSSDDEWWTARKVHENGEETAEGVIPSKKRVEKRERLRRKQVNFNSGSQSLGRNSSTTGLENRRGSRSQLSFSRKFPFVKSTDRLNDLNEESSNVAEEPVWSYQAVEQQAINYVRPVIILGALKDRINDELVNRDPSKFSSCVPHTSRPPREGEVNGRDYYFVNKHNMEEDVKNNLFIEAGQFQNNLYGTSIQSVRDVANQGRHCILDVSGNAIRRLQSNANIQPISIFIKPSSAQQILELDSQLATNRQDDRAMSGEEAQAQYSRCHRIEQTFGDLFTQEISNVHSANDVLSKVYSIISRESQTPIWVPRH.

An L27 domain is found at 5–65; that stretch reads SSEKAHKAIE…LYEQTLLSER (61 aa). The 88-residue stretch at 202-289 folds into the PDZ 1 domain; the sequence is NIVLEKGHTG…VVSLSLKRRK (88 aa). A disordered region spans residues 324 to 351; that stretch reads IHSPSAPIHPPPPPPVHHGSLSQLSVGQ. Over residues 330-339 the composition is skewed to pro residues; the sequence is PIHPPPPPPV. 2 consecutive PDZ domains span residues 361–448 and 510–591; these read VIDL…QQGT and PVQL…QYRP. The 72-residue stretch at 619 to 690 folds into the SH3 domain; it reads RKSEYVRALF…PSKKRVEKRE (72 aa). A disordered region spans residues 673–723; that stretch reads EETAEGVIPSKKRVEKRERLRRKQVNFNSGSQSLGRNSSTTGLENRRGSRS. The segment covering 682–696 has biased composition (basic residues); sequence SKKRVEKRERLRRKQ. The span at 697 to 715 shows a compositional bias: polar residues; it reads VNFNSGSQSLGRNSSTTGL. A Guanylate kinase-like domain is found at 769 to 955; the sequence is VRPVIILGAL…VLSKVYSIIS (187 aa).

It belongs to the MAGUK family. In terms of assembly, homooligomerizes; requires L27 domain. Interacts (via L27 domain) with ajm-1; the interaction regulates ajm-1 apical junction location. As to expression, expressed in the apical junctions in the hypodermis. Expressed in epithelial cells in the reproductive system including vulva, uterus and spermatheca.

It localises to the membrane. It is found in the apical cell membrane. The protein localises to the cell junction. Its subcellular location is the adherens junction. The protein resides in the lateral cell membrane. It localises to the cytoplasm. Its function is as follows. Essential multidomain scaffolding protein required for normal development. Recruits channels, receptors and signaling molecules to discrete plasma membrane domains in polarized cells. Required for proper embryonic elongation. Acts upstream of ajm-1 and becomes localized to apical junctions independently of ajm-1. With let-413, cooperatively regulates ajm-1 localization to apical junctions and the establishment of newly formed epithelia. Plays a role in assembling the adherens junction by clustering ajm-1 and other proteins, to form electron-dense structures; may form a compartment distinct to that of hmp-1 and associated proteins. Plays a role in the directed outgrowth of seam cells, towards neighboring seam cells, during larval development. This is Disks large homolog 1 from Caenorhabditis elegans.